We begin with the raw amino-acid sequence, 249 residues long: Uridylate kinase (249 aa).

21 to 24 is an ATP binding site; sequence KLSG. Residue glycine 63 participates in UMP binding. ATP-binding residues include glycine 64 and arginine 68. Residues aspartate 84 and 145–152 each bind UMP; that span reads TGNPFVTT. Positions 172, 178, and 181 each coordinate ATP.

This sequence belongs to the UMP kinase family. Homohexamer.

It localises to the cytoplasm. The enzyme catalyses UMP + ATP = UDP + ADP. Its pathway is pyrimidine metabolism; CTP biosynthesis via de novo pathway; UDP from UMP (UMPK route): step 1/1. Its activity is regulated as follows. Inhibited by UTP. In terms of biological role, catalyzes the reversible phosphorylation of UMP to UDP. This chain is Uridylate kinase, found in Francisella tularensis subsp. holarctica (strain FTNF002-00 / FTA).